The sequence spans 363 residues: 3-methyl-D-ornithine--L-lysine ligase (363 aa).

Lys-10 lines the ATP pocket. 11 to 12 (LQ) serves as a coordination point for L-lysine. Residues Asp-31, 49-50 (DV), and 72-73 (EN) each bind ATP. Glu-72 contributes to the L-lysine binding site. Residues Lys-104, Lys-131, Ser-138, and 160 to 163 (EEYV) each bind ADP. Residues 169–171 (SLE) and Asp-225 contribute to the D-ornithine site. 3 residues coordinate Mg(2+): Glu-227, Glu-239, and Asp-241. An ADP-binding site is contributed by Glu-239. Residues 243-248 (RFPSQT) and Glu-302 each bind D-ornithine. 2 residues coordinate L-lysine: Ser-246 and Glu-302.

This sequence belongs to the PylC family. Mg(2+) serves as cofactor.

It carries out the reaction (3R)-3-methyl-D-ornithine + L-lysine + ATP = (3R)-3-methyl-D-ornithyl-N(6)-L-lysine + ADP + phosphate + H(+). Its pathway is amino-acid biosynthesis; L-pyrrolysine biosynthesis. In terms of biological role, is required for the biosynthesis of pyrrolysine. Catalyzes the ATP-dependent ligation between (3R)-3-methyl-D-ornithine and L-lysine, leading to (3R)-3-methyl-D-ornithyl-N6-L-lysine. In Methanosarcina barkeri (strain Fusaro / DSM 804), this protein is 3-methyl-D-ornithine--L-lysine ligase.